Consider the following 304-residue polypeptide: N-acetyl-D-glucosamine kinase (304 aa).

ATP contacts are provided by residues 4-11 (GFDMGGTK) and 133-140 (GVGGGLIV). Positions 157, 177, 179, and 184 each coordinate Zn(2+).

Belongs to the ROK (NagC/XylR) family. NagK subfamily.

The enzyme catalyses N-acetyl-D-glucosamine + ATP = N-acetyl-D-glucosamine 6-phosphate + ADP + H(+). Its pathway is cell wall biogenesis; peptidoglycan recycling. Catalyzes the phosphorylation of N-acetyl-D-glucosamine (GlcNAc) derived from cell-wall degradation, yielding GlcNAc-6-P. This Yersinia pseudotuberculosis serotype O:1b (strain IP 31758) protein is N-acetyl-D-glucosamine kinase.